The chain runs to 544 residues: Pentatricopeptide repeat-containing protein At1g66345, mitochondrial (544 aa).

Residues 1 to 116 (MASALRRLVE…RNLRHGIKSY (116 aa)) constitute a mitochondrion transit peptide. 11 PPR repeats span residues 163–197 (TPLVFDLLVQCYAKIRYLELGFDVFKRLCDCGFTL), 198–232 (SVITLNTLIHYSSKSKIDDLVWRIYECAIDKRIYP), 233–267 (NEITIRIMIQVLCKEGRLKEVVDLLDRICGKRCLP), 268–302 (SVIVNTSLVFRVLEEMRIEESMSLLKRLLMKNMVV), 303–337 (DTIGYSIVVYAKAKEGDLVSARKVFDEMLQRGFSA), 338–372 (NSFVYTVFVRVCCEKGDVKEAERLLSEMEESGVSP), 373–407 (YDETFNCLIGGFARFGWEEKGLEYCEVMVTRGLMP), 408–442 (SCSAFNEMVKSVSKIENVNRANEILTKSIDKGFVP), 443–477 (DEHTYSHLIRGFIEGNDIDQALKLFYEMEYRKMSP), 478–512 (GFEVFRSLIVGLCTCGKVEAGEKYLKIMKKRLIEP), and 513–544 (NADIYDALIKAFQKIGDKTNADRVYNEMISVR).

This sequence belongs to the PPR family. P subfamily.

Its subcellular location is the mitochondrion. This chain is Pentatricopeptide repeat-containing protein At1g66345, mitochondrial, found in Arabidopsis thaliana (Mouse-ear cress).